The primary structure comprises 466 residues: Phosphomethylpyrimidine synthase (466 aa).

Residues N80, M109, Y139, H175, 195–197 (SRG), 236–239 (DSLR), and E275 each bind substrate. H279 is a binding site for Zn(2+). Substrate is bound at residue Y302. H343 is a Zn(2+) binding site. [4Fe-4S] cluster contacts are provided by C423, C426, and C431.

The protein belongs to the ThiC family. [4Fe-4S] cluster is required as a cofactor.

The enzyme catalyses 5-amino-1-(5-phospho-beta-D-ribosyl)imidazole + S-adenosyl-L-methionine = 4-amino-2-methyl-5-(phosphooxymethyl)pyrimidine + CO + 5'-deoxyadenosine + formate + L-methionine + 3 H(+). It participates in cofactor biosynthesis; thiamine diphosphate biosynthesis. Catalyzes the synthesis of the hydroxymethylpyrimidine phosphate (HMP-P) moiety of thiamine from aminoimidazole ribotide (AIR) in a radical S-adenosyl-L-methionine (SAM)-dependent reaction. This Synechococcus sp. (strain RCC307) protein is Phosphomethylpyrimidine synthase.